The sequence spans 621 residues: Putative DNA 3'-5' helicase Rad25 (621 aa).

The Helicase ATP-binding domain maps to 268–417 (VERFTEQGSG…EIFTLIGPPI (150 aa)). 281–288 (GPPGSGKT) lines the ATP pocket. A DEAH box motif is present at residues 371–374 (DEVH). The segment at 441 to 465 (PWGDETEQSEYSSTSGHDRRQAAAS) is disordered. Residues 469-621 (KIDEIRYALA…EAVEPPAKTE (153 aa)) form the Helicase C-terminal domain.

It belongs to the helicase family. RAD25/XPB subfamily.

The catalysed reaction is Couples ATP hydrolysis with the unwinding of duplex DNA by translocating in the 3'-5' direction.. It carries out the reaction ATP + H2O = ADP + phosphate + H(+). The chain is Putative DNA 3'-5' helicase Rad25 from Haloarcula marismortui (strain ATCC 43049 / DSM 3752 / JCM 8966 / VKM B-1809) (Halobacterium marismortui).